The sequence spans 373 residues: ATP phosphoribosyltransferase regulatory subunit (373 aa).

It belongs to the class-II aminoacyl-tRNA synthetase family. HisZ subfamily. Heteromultimer composed of HisG and HisZ subunits.

The protein resides in the cytoplasm. It functions in the pathway amino-acid biosynthesis; L-histidine biosynthesis; L-histidine from 5-phospho-alpha-D-ribose 1-diphosphate: step 1/9. Its function is as follows. Required for the first step of histidine biosynthesis. May allow the feedback regulation of ATP phosphoribosyltransferase activity by histidine. This Rhizobium leguminosarum bv. trifolii (strain WSM2304) protein is ATP phosphoribosyltransferase regulatory subunit.